A 402-amino-acid polypeptide reads, in one-letter code: FMN-dependent alpha-hydroxy acid dehydrogenase qulF (402 aa).

The 373-residue stretch at 22 to 394 folds into the FMN hydroxy acid dehydrogenase domain; that stretch reads RLPAITTNPT…NRDCMRRISY (373 aa). An a 2-oxocarboxylate-binding site is contributed by tyrosine 48. Serine 130 and glutamine 152 together coordinate FMN. A 2-oxocarboxylate contacts are provided by tyrosine 154 and arginine 189. Lysine 265 serves as a coordination point for FMN. Residue histidine 289 is the Proton acceptor of the active site. Residue arginine 292 participates in a 2-oxocarboxylate binding. FMN is bound by residues 320–324 and 343–344; these read DSGVR and GR.

The protein belongs to the FMN-dependent alpha-hydroxy acid dehydrogenase family. FMN serves as cofactor.

In terms of biological role, FMN-dependent alpha-hydroxy acid dehydrogenase; part of the gene cluster that mediates the biosynthesis of quinolactacin A2 (QUL A2), a fungal alkaloid that features a quinolone-gamma-lactam hybrid, which is a potential pharmacophore for the treatment of cancer and Alzheimer's disease. The quinolone-gamma-lactam hybrid scaffold is synthesized from the combination of L-isoleucine (L-Ile) and the nonproteinogenic amino acid L-kynurenine, followed by quinolone cyclization, oxidative decarboxylation, and lactam formation. Additionally, the N-methyl group is derived from methionine, which might be catalyzed by an S-adenosylmethionine (SAM)-dependent methyltransferase. Bioconversion of L-tryptophan to L-kynurenine could be catalyzed by the indoleamine-2,3-dioxygenase (IDO) qulI to produce an unstable product, N-formyl-L-kynurenine, followed by kynurenine formamidase catalyzed hydrolysis. QulM then acts as a methyltransferase that methylates L-kynurenine at the N-4 position. The FMN-dependent alpha-hydroxy acid dehydrogenase qulF than functions as an oxidative decarboxylase which converts N-methylkynurenine into 2-aminobenzoylacetamide via 2 tandem reactions, including dehydrogenation and decarboxylation. An amidase located outside of the qul gene cluster further produces the unstable beta-keto acid precursor N-methyl-2-aminobenzoylacetate, which could be spontaneously dehydrated to form N-methyl-4-hydroxy-2-quinolone. The NRPS qulB is able to incorporate N-methyl-2-aminobenzoylacetate and efficiently compete with the spontaneous reaction. By further extending the beta-keto acid with L-Ile, qulA performs a Dieckmann condensation to form the gamma-lactam ring and release a 4-ketopyrrolidinone intermediate from the assembly line. This intermediate could plausibly further undergo a spontaneous cyclization to yield the final quinolone-gamma-lactam hybrid structure. The sequence is that of FMN-dependent alpha-hydroxy acid dehydrogenase qulF from Penicillium citrinum.